We begin with the raw amino-acid sequence, 224 residues long: UPF0758 protein Nmul_A2138 (224 aa).

Residues A102 to I224 enclose the MPN domain. Residues H173, H175, and D186 each coordinate Zn(2+). A JAMM motif motif is present at residues H173–D186.

Belongs to the UPF0758 family.

The polypeptide is UPF0758 protein Nmul_A2138 (Nitrosospira multiformis (strain ATCC 25196 / NCIMB 11849 / C 71)).